The chain runs to 484 residues: Cathepsin F (484 aa).

Residues Met1–Ala19 form the signal peptide. Residues Ala20–Leu270 constitute a propeptide, activation peptide. N-linked (GlcNAc...) asparagine glycosylation is found at Asn160 and Asn195. Cystine bridges form between Cys292–Cys333 and Cys326–Cys366. Residue Cys295 is part of the active site. N-linked (GlcNAc...) asparagine glycans are attached at residues Asn367 and Asn378. Residues Cys424 and Cys472 are joined by a disulfide bond. His431 is a catalytic residue. Asn440 carries N-linked (GlcNAc...) asparagine glycosylation. Asn451 is a catalytic residue.

The protein belongs to the peptidase C1 family. In terms of tissue distribution, high expression levels in heart, skeletal muscle, brain, testis and ovary; moderate levels in prostate, placenta, liver and colon; and no detectable expression in peripheral leukocytes and thymus.

The protein resides in the lysosome. The enzyme catalyses The recombinant enzyme cleaves synthetic substrates with Phe and Leu (better than Val) in P2, with high specificity constant (kcat/Km) comparable to that of cathepsin L.. Functionally, thiol protease which is believed to participate in intracellular degradation and turnover of proteins. Has also been implicated in tumor invasion and metastasis. This Homo sapiens (Human) protein is Cathepsin F (CTSF).